The primary structure comprises 209 residues: Imidazole glycerol phosphate synthase subunit HisH (209 aa).

In terms of domain architecture, Glutamine amidotransferase type-1 spans 1-205 (MIAIIDYGMG…KGVVETWKSS (205 aa)). Cysteine 79 acts as the Nucleophile in catalysis. Residues histidine 180 and glutamate 182 contribute to the active site.

In terms of assembly, heterodimer of HisH and HisF.

It localises to the cytoplasm. It catalyses the reaction 5-[(5-phospho-1-deoxy-D-ribulos-1-ylimino)methylamino]-1-(5-phospho-beta-D-ribosyl)imidazole-4-carboxamide + L-glutamine = D-erythro-1-(imidazol-4-yl)glycerol 3-phosphate + 5-amino-1-(5-phospho-beta-D-ribosyl)imidazole-4-carboxamide + L-glutamate + H(+). The enzyme catalyses L-glutamine + H2O = L-glutamate + NH4(+). Its pathway is amino-acid biosynthesis; L-histidine biosynthesis; L-histidine from 5-phospho-alpha-D-ribose 1-diphosphate: step 5/9. Functionally, IGPS catalyzes the conversion of PRFAR and glutamine to IGP, AICAR and glutamate. The HisH subunit catalyzes the hydrolysis of glutamine to glutamate and ammonia as part of the synthesis of IGP and AICAR. The resulting ammonia molecule is channeled to the active site of HisF. The protein is Imidazole glycerol phosphate synthase subunit HisH of Bacillus thuringiensis subsp. konkukian (strain 97-27).